The chain runs to 310 residues: Protein TIFY 6A (310 aa).

Residues 141–176 enclose the Tify domain; the sequence is SKPLPPQLTIFYAGSVLVYQDIAPEKAQAIMLLAGN. Positions 259–284 match the Jas motif; the sequence is PQTRKASLARFLEKRKERVINVSPYY. A Nuclear localization signal motif is present at residues 261 to 268; sequence TRKASLAR.

Belongs to the TIFY/JAZ family. Homo- and heterodimer. Interacts with MYC2, AFPH2/NINJA, TIFY10A/JAZ1, TIFY6B/JAZ3, TIFY5A/JAZ8, TIFY9/JAZ10 and TIFY3A/JAZ11. Interacts with RHD6 and RSL1. Post-translationally, ubiquitinated. Targeted for degradation by the SCF(COI1) E3 ubiquitin ligase-proteasome pathway during jasmonate signaling.

The protein resides in the nucleus. Functionally, repressor of jasmonate responses. Interacts with and suppresses RHD6 and RSL1 transcription factor activities to negatively regulate jasmonate-stimulated root hair development. The chain is Protein TIFY 6A (TIFY6A) from Arabidopsis thaliana (Mouse-ear cress).